Here is a 234-residue protein sequence, read N- to C-terminus: Redox-sensing transcriptional repressor Rex (234 aa).

The segment at residues Thr-17–Phe-56 is a DNA-binding region (H-T-H motif). Gly-91 to Gly-96 serves as a coordination point for NAD(+).

Belongs to the transcriptional regulatory Rex family. As to quaternary structure, homodimer.

It localises to the cytoplasm. Its function is as follows. Modulates transcription in response to changes in cellular NADH/NAD(+) redox state. The protein is Redox-sensing transcriptional repressor Rex of Deinococcus radiodurans (strain ATCC 13939 / DSM 20539 / JCM 16871 / CCUG 27074 / LMG 4051 / NBRC 15346 / NCIMB 9279 / VKM B-1422 / R1).